The chain runs to 326 residues: H-2 class I histocompatibility antigen, Q8 alpha chain (326 aa).

The first 21 residues, 1–21 (MALTMLLLLVAAALTLIETRA), serve as a signal peptide directing secretion. An alpha-1 region spans residues 22–111 (GPHSLRYFHT…AQRYYNQSKG (90 aa)). The Extracellular segment spans residues 22–305 (GPHSLRYFHT…EPPPSTVSNM (284 aa)). N-linked (GlcNAc...) asparagine glycosylation is present at N107. The segment at 112–203 (GSHTLQWMYG…QLRKETLLCT (92 aa)) is alpha-2. Intrachain disulfides connect C122/C185 and C224/C280. The alpha-3 stretch occupies residues 204-295 (DPPKAHVTHH…GLPEPLTLRW (92 aa)). In terms of domain architecture, Ig-like C1-type spans 206-294 (PKAHVTHHPR…EGLPEPLTLR (89 aa)). A glycan (N-linked (GlcNAc...) asparagine) is linked at N277. Positions 296–305 (EPPPSTVSNM) are connecting peptide. The helical transmembrane segment at 306 to 326 (ANVAILVVLVAWPSLELWWIL) threads the bilayer.

This sequence belongs to the MHC class I family. Heterodimer of an alpha chain and a beta chain (beta-2-microglobulin).

It is found in the membrane. Functionally, involved in the presentation of foreign antigens to the immune system. The chain is H-2 class I histocompatibility antigen, Q8 alpha chain (H2-Q8) from Mus musculus (Mouse).